The primary structure comprises 48 residues: Probable antitoxin PhoAT (48 aa).

The protein belongs to the PhoAT antitoxin family. Interacts with toxin PhoH2.

Its function is as follows. Probable antitoxin component of a type II toxin-antitoxin (TA) system. The probable cognate antitoxin is PhoAT; the toxin gene can be expressed in the absence of the antitoxin gene in M.smegmatis strain mc(2)155. This chain is Probable antitoxin PhoAT, found in Mycolicibacterium smegmatis (strain ATCC 700084 / mc(2)155) (Mycobacterium smegmatis).